Consider the following 251-residue polypeptide: 3-deoxy-manno-octulosonate cytidylyltransferase (251 aa).

The protein belongs to the KdsB family.

The protein localises to the cytoplasm. The enzyme catalyses 3-deoxy-alpha-D-manno-oct-2-ulosonate + CTP = CMP-3-deoxy-beta-D-manno-octulosonate + diphosphate. It functions in the pathway nucleotide-sugar biosynthesis; CMP-3-deoxy-D-manno-octulosonate biosynthesis; CMP-3-deoxy-D-manno-octulosonate from 3-deoxy-D-manno-octulosonate and CTP: step 1/1. Its pathway is bacterial outer membrane biogenesis; lipopolysaccharide biosynthesis. Activates KDO (a required 8-carbon sugar) for incorporation into bacterial lipopolysaccharide in Gram-negative bacteria. The protein is 3-deoxy-manno-octulosonate cytidylyltransferase of Vibrio parahaemolyticus serotype O3:K6 (strain RIMD 2210633).